Here is a 360-residue protein sequence, read N- to C-terminus: UPF0496 protein At3g19250 (360 aa).

Positions 1 to 29 (MPHCFTFKPASPEGSLGDDHLPHPSPEGS) are disordered. Helical transmembrane passes span 205–225 (HHAT…VAAS) and 229–249 (IAYH…TPYL).

Belongs to the UPF0496 family.

The protein localises to the membrane. The polypeptide is UPF0496 protein At3g19250 (Arabidopsis thaliana (Mouse-ear cress)).